The following is a 503-amino-acid chain: MLPDSEGQKLKTFLLGTGTTLDPSLDPTGNSNFSMATTSDSSTIWTALPASQPGDKDIPTVDLAAISEAYGSTSSTTSLTSSVTSQYQYNSYPQYAMYTSANPANYYQQVTANLRAGTTAFPYSLTTPSYYGSYPVDYTSAAAAYQNPYYTNLRGGTAAPYYNPLNATTAAAYASVASSVLGTDAVNLGTSSDGSTGVPSTVTSFSLKEKKPKVSKKKKTGSCSPGDETYARVFIWDIDDIAVISRNYLASVTHTNEFYARAANSVSHLMERIALNNFADVNEFLEGDITNIEDAVVDETTMDSGPIDNLRGLDVMRRVAPKYSAFRQFYTENSTKNDVAGFKQEQNGFNFELLERVGFGAREATELYQSAIQLQTLPNFGQRWPCAQRCMDLVVEKSKLSAEKYANVVLSNDGLVLGAAQLMISGLNSSVPVENIYSISKQGKESVFEKIQSRFGKKCSFICITSGDTANSAKRLNIPVWPLNSNTDLDKLYSALDNFLLGG.

Asp237 functions as the Nucleophile in the catalytic mechanism. The Mg(2+) site is built by Asp237 and Asp239. The active-site Proton donor is Asp239.

This sequence belongs to the HAD-like hydrolase superfamily. EYA family. Interacts (via C-terminus) with ceh-34 (via N-terminus). Requires Mg(2+) as cofactor. Expressed in body wall muscles. Expressed in BAG sensory neurons and in other head neurons.

Its subcellular location is the nucleus. It catalyses the reaction O-phospho-L-tyrosyl-[protein] + H2O = L-tyrosyl-[protein] + phosphate. Its function is as follows. Tyrosine protein phosphatase. Acts probably as a transcription regulator in the embryonic and postembryonic development of several tissues including pharynx, vulva and gonads. Required for the development of anterior tissues during late embryogenesis. Together with ceh-34, required to specify the coelomocyte fate in embryonic and postembryonic precursors. In the anterior part of the embryo, prevents apoptosis in cells that are not fated to die. Together with ceh-34 activates proapoptotic factor egl-1 expression to promote motor neuron M4 sister cell apoptosis. Also promotes apoptosis of I1 pharyngeal neuron sister cell. Plays a role in locomotion and fertility. May play a role in resistance to heat and oxidative stresses. May cooperate with the transcription factors vab-3 and ceh-32 to repress transcription factor ets-5 expression in non BAG neuronal cells. This is Protein phosphatase eya-1 from Caenorhabditis elegans.